The following is a 189-amino-acid chain: uncharacterized protein (189 aa).

The next 4 membrane-spanning stretches (helical) occupy residues 49-69, 78-98, 102-122, and 124-144; these read LLGI…LFVF, LFHK…LSLF, LTIV…FPMI, and VSIA…LFPA. Residues 165–189 are disordered; sequence SSSAPDLNYPSLPTQSASPSQRFSA.

It belongs to the chlamydial CPn_0442/CT_006/TC_0274 family.

The protein localises to the cell membrane. This is an uncharacterized protein from Chlamydia trachomatis serovar D (strain ATCC VR-885 / DSM 19411 / UW-3/Cx).